Here is a 286-residue protein sequence, read N- to C-terminus: ATP synthase gamma chain (286 aa).

Belongs to the ATPase gamma chain family. F-type ATPases have 2 components, CF(1) - the catalytic core - and CF(0) - the membrane proton channel. CF(1) has five subunits: alpha(3), beta(3), gamma(1), delta(1), epsilon(1). CF(0) has three main subunits: a, b and c.

It is found in the cell inner membrane. Produces ATP from ADP in the presence of a proton gradient across the membrane. The gamma chain is believed to be important in regulating ATPase activity and the flow of protons through the CF(0) complex. The polypeptide is ATP synthase gamma chain (Leptospira borgpetersenii serovar Hardjo-bovis (strain JB197)).